The primary structure comprises 637 residues: Acetolactate synthase 2, chloroplastic (637 aa).

A chloroplast-targeting transit peptide spans 1–73; that stretch reads MASFSFFGTI…SSKYAPNVPR (73 aa). The interval 35–69 is disordered; it reads RRATRVSVSANSKKDQDRTASRRENPSTFSSKYAP. The segment covering 46–59 has biased composition (basic and acidic residues); it reads SKKDQDRTASRREN. Position 120 (E120) interacts with thiamine diphosphate. FAD contacts are provided by residues R222, 329–350, and 372–391; these read HGTVYANYAVEYSDLLLAFGVR and DIDSTEIGKNKTPHVSVCCD. Residues 462 to 542 form a thiamine pyrophosphate binding region; the sequence is QHQMWAAQFY…VKVLLINNQH (81 aa). D513 and N540 together coordinate Mg(2+).

Belongs to the TPP enzyme family. Mg(2+) is required as a cofactor. Thiamine diphosphate serves as cofactor.

It localises to the plastid. The protein localises to the chloroplast. The catalysed reaction is 2 pyruvate + H(+) = (2S)-2-acetolactate + CO2. Its pathway is amino-acid biosynthesis; L-isoleucine biosynthesis; L-isoleucine from 2-oxobutanoate: step 1/4. The protein operates within amino-acid biosynthesis; L-valine biosynthesis; L-valine from pyruvate: step 1/4. The chain is Acetolactate synthase 2, chloroplastic from Brassica napus (Rape).